Here is a 273-residue protein sequence, read N- to C-terminus: Small ribosomal subunit protein uS2 (273 aa).

The tract at residues 244–273 (SDEEANSSAEENENRQEDLLAKKYDSSEAN) is disordered. A compositionally biased stretch (basic and acidic residues) spans 255–273 (NENRQEDLLAKKYDSSEAN).

This sequence belongs to the universal ribosomal protein uS2 family.

The sequence is that of Small ribosomal subunit protein uS2 from Chlamydia felis (strain Fe/C-56) (Chlamydophila felis).